Consider the following 76-residue polypeptide: Proteolipid protein 2 (76 aa).

The MARVEL domain occupies 1-60 (ISGPWSDFFRALGAVILYLMTSIVVLVERGNNSKGAAGVLGLCAAGLFGYDAYITFPSGT). A helical transmembrane segment spans residues 8–28 (FFRALGAVILYLMTSIVVLVE). A glycan (N-linked (GlcNAc...) asparagine) is linked at N31. The chain crosses the membrane as a helical span at residues 36-56 (AAGVLGLCAAGLFGYDAYITF).

Its subcellular location is the membrane. Its function is as follows. May play a role in cell differentiation in the intestinal epithelium. The protein is Proteolipid protein 2 (PLP2) of Ovis aries (Sheep).